Here is a 146-residue protein sequence, read N- to C-terminus: MDHPPLQVKVVSADREVWKGESVNIIVRTTEGDIGLLPGHEAFLAALAPCAAQIITTDGNREVIACDGGFVALDNDGQVSIITQYATRSEEISVDQARRDRDSLRKKLNEHERSEQDPEVVQDLTHRLHLAQAQIAAARLAGKQRS.

The segment covering 92 to 116 has biased composition (basic and acidic residues); sequence ISVDQARRDRDSLRKKLNEHERSEQ. Residues 92–120 are disordered; it reads ISVDQARRDRDSLRKKLNEHERSEQDPEV.

This sequence belongs to the ATPase epsilon chain family. F-type ATPases have 2 components, CF(1) - the catalytic core - and CF(0) - the membrane proton channel. CF(1) has five subunits: alpha(3), beta(3), gamma(1), delta(1), epsilon(1). CF(0) has three main subunits: a, b and c.

The protein resides in the cell membrane. Its function is as follows. Produces ATP from ADP in the presence of a proton gradient across the membrane. In Cutibacterium acnes (strain DSM 16379 / KPA171202) (Propionibacterium acnes), this protein is ATP synthase epsilon chain.